Here is a 573-residue protein sequence, read N- to C-terminus: Probable cytochrome c oxidase subunit 1 (573 aa).

The helical transmembrane segment at 40–60 threads the bilayer; that stretch reads IGIMYCVACISFFFIGGLLAL. Residue histidine 86 coordinates Fe(II)-heme a. 6 helical membrane passes run 89–109, 121–141, 170–190, 213–233, 258–278, and 290–310; these read IMLL…VLPL, LNAF…AGFI, LWIM…VNMI, IMVT…ALFG, LFWF…FGIV, and IFGY…SVAV. 2 residues coordinate Cu cation: histidine 264 and tyrosine 268. Residues 264–268 constitute a cross-link (1'-histidyl-3'-tyrosine (His-Tyr)); it reads HPEVY. Cu cation-binding residues include histidine 313 and histidine 314. The next 2 membrane-spanning stretches (helical) occupy residues 315–335 and 359–379; these read MFAT…LIAV and MLFS…GVLL. Histidine 397 is a heme a3 binding site. Helical transmembrane passes span 398-418, 433-453, and 476-496; these read FHYV…YFWF, LHFW…HWLG, and VSTI…WNVF. Histidine 399 provides a ligand contact to Fe(II)-heme a.

This sequence belongs to the heme-copper respiratory oxidase family.

The protein localises to the cell membrane. It carries out the reaction 4 Fe(II)-[cytochrome c] + O2 + 8 H(+)(in) = 4 Fe(III)-[cytochrome c] + 2 H2O + 4 H(+)(out). Its pathway is energy metabolism; oxidative phosphorylation. Cytochrome c oxidase is the component of the respiratory chain that catalyzes the reduction of oxygen to water. Subunits 1-3 form the functional core of the enzyme complex. CO I is the catalytic subunit of the enzyme. Electrons originating in cytochrome c are transferred via the copper A center of subunit 2 and heme A of subunit 1 to the bimetallic center formed by heme A3 and copper B. This chain is Probable cytochrome c oxidase subunit 1 (ctaD), found in Mycobacterium bovis (strain ATCC BAA-935 / AF2122/97).